Consider the following 462-residue polypeptide: L-seryl-tRNA(Sec) selenium transferase (462 aa).

Lys-293 carries the N6-(pyridoxal phosphate)lysine modification.

It belongs to the SelA family. The cofactor is pyridoxal 5'-phosphate.

It is found in the cytoplasm. It catalyses the reaction L-seryl-tRNA(Sec) + selenophosphate + H(+) = L-selenocysteinyl-tRNA(Sec) + phosphate. It participates in aminoacyl-tRNA biosynthesis; selenocysteinyl-tRNA(Sec) biosynthesis; selenocysteinyl-tRNA(Sec) from L-seryl-tRNA(Sec) (bacterial route): step 1/1. Its function is as follows. Converts seryl-tRNA(Sec) to selenocysteinyl-tRNA(Sec) required for selenoprotein biosynthesis. The protein is L-seryl-tRNA(Sec) selenium transferase of Clostridium botulinum (strain Okra / Type B1).